The following is a 156-amino-acid chain: ATP synthase subunit b (156 aa).

A helical transmembrane segment spans residues 7-29 (LIGQLIAFALFTWFCVKFVWPPI).

Belongs to the ATPase B chain family. As to quaternary structure, F-type ATPases have 2 components, F(1) - the catalytic core - and F(0) - the membrane proton channel. F(1) has five subunits: alpha(3), beta(3), gamma(1), delta(1), epsilon(1). F(0) has three main subunits: a(1), b(2) and c(10-14). The alpha and beta chains form an alternating ring which encloses part of the gamma chain. F(1) is attached to F(0) by a central stalk formed by the gamma and epsilon chains, while a peripheral stalk is formed by the delta and b chains.

The protein resides in the cell inner membrane. F(1)F(0) ATP synthase produces ATP from ADP in the presence of a proton or sodium gradient. F-type ATPases consist of two structural domains, F(1) containing the extramembraneous catalytic core and F(0) containing the membrane proton channel, linked together by a central stalk and a peripheral stalk. During catalysis, ATP synthesis in the catalytic domain of F(1) is coupled via a rotary mechanism of the central stalk subunits to proton translocation. Its function is as follows. Component of the F(0) channel, it forms part of the peripheral stalk, linking F(1) to F(0). The chain is ATP synthase subunit b from Actinobacillus succinogenes (strain ATCC 55618 / DSM 22257 / CCUG 43843 / 130Z).